The chain runs to 246 residues: ATP synthase subunit a, chloroplastic (246 aa).

The next 5 membrane-spanning stretches (helical) occupy residues 33–53, 99–119, 133–153, 201–221, and 222–242; these read VHGQ…GFGL, TIFL…WALI, INTT…AGIN, GVLV…LGLF, and TSAI…GESL.

Belongs to the ATPase A chain family. In terms of assembly, F-type ATPases have 2 components, CF(1) - the catalytic core - and CF(0) - the membrane proton channel. CF(1) has five subunits: alpha(3), beta(3), gamma(1), delta(1), epsilon(1). CF(0) has four main subunits: a, b, b' and c.

The protein localises to the plastid. Its subcellular location is the chloroplast thylakoid membrane. Functionally, key component of the proton channel; it plays a direct role in the translocation of protons across the membrane. This Oltmannsiellopsis viridis (Marine flagellate) protein is ATP synthase subunit a, chloroplastic.